The following is a 226-amino-acid chain: Cytochrome c-553I (226 aa).

The N-terminal stretch at 1–22 is a signal peptide; that stretch reads MTSKTTASLLAICVACAASAIA. Positions 43 to 68 are disordered; it reads AAVSGDAHEQPAAEAPAEEEEETPAV. Heme is bound by residues cysteine 125, cysteine 128, histidine 129, and methionine 173. The interval 203 to 226 is disordered; sequence RGRPAKREDKSDEFVAQEDSCMSG.

In terms of processing, binds 1 heme group per subunit.

The protein localises to the periplasm. This chain is Cytochrome c-553I (cycB), found in Paracoccus denitrificans.